A 145-amino-acid chain; its full sequence is Large ribosomal subunit protein bL19 (145 aa).

Belongs to the bacterial ribosomal protein bL19 family.

Its function is as follows. This protein is located at the 30S-50S ribosomal subunit interface and may play a role in the structure and function of the aminoacyl-tRNA binding site. In Brachyspira hyodysenteriae (strain ATCC 49526 / WA1), this protein is Large ribosomal subunit protein bL19.